Here is a 549-residue protein sequence, read N- to C-terminus: DNA polymerase lambda (549 aa).

Positions 17–116 (DPDGMFRGVS…ERLPEHKFAI (100 aa)) constitute a BRCT domain. The disordered stretch occupies residues 126–197 (KEGGAAGSGV…ASGDSKETIA (72 aa)). Positions 149–175 (PENRKETAGGNRESRDAIAHPNEDSDV) are enriched in basic and acidic residues. Polar residues predominate over residues 180-197 (STCTSSQSASGDSKETIA). The tract at residues 233–247 (NIYRALGDDRRSFSY) is DNA-binding. Residue His-280 is part of the active site. Residues 315 to 318 (GPAT) form a DNA-binding region. DCTP contacts are provided by residues Arg-356, 387–390 (SYRR), and 396–399 (GDMD). Residues 390–399 (RGKSSCGDMD) are involved in primer binding. Mn(2+)-binding residues include Asp-397, Asp-399, and Asp-464. A DNA-binding region spans residues 438–479 (IEGTDCGVDTYFGLCTYPGRELRHRIDLKVYPRNRHAFGLLA). Position 487 (Asn-487) interacts with dCTP.

Belongs to the DNA polymerase type-X family. Interacts with PCNA. Requires Mn(2+) as cofactor. In terms of tissue distribution, expressed in proliferating tissues. Expressed in roots, root apex, young leaves, shoot apical meristem (SAM), flag leaves and panicles.

The protein resides in the nucleus. The catalysed reaction is DNA(n) + a 2'-deoxyribonucleoside 5'-triphosphate = DNA(n+1) + diphosphate. Functionally, repair polymerase involved in base excision repair (BER) and responsible for repair of lesions that give rise to abasic (AP) sites in DNA. Has both DNA polymerase and terminal transferase activities. Has a 5'-deoxyribose-5-phosphate lyase (dRP lyase) activity. The protein is DNA polymerase lambda of Oryza sativa subsp. japonica (Rice).